The following is a 104-amino-acid chain: N(4)-acetylcytidine amidohydrolase (104 aa).

An ASCH domain is found at 7-104 (TFFTRFEQDI…FWVIAFELVD (98 aa)). Catalysis depends on K21, which acts as the Proton acceptor. T24 functions as the Nucleophile in the catalytic mechanism. The Proton donor role is filled by E74.

It belongs to the N(4)-acetylcytidine amidohydrolase family.

The catalysed reaction is N(4)-acetylcytidine + H2O = cytidine + acetate + H(+). It catalyses the reaction N(4)-acetyl-2'-deoxycytidine + H2O = 2'-deoxycytidine + acetate + H(+). The enzyme catalyses N(4)-acetylcytosine + H2O = cytosine + acetate + H(+). Catalyzes the hydrolysis of N(4)-acetylcytidine (ac4C). The polypeptide is N(4)-acetylcytidine amidohydrolase (Pasteurella multocida (strain Pm70)).